Reading from the N-terminus, the 273-residue chain is MKIISNPLELKEYLKDEKRSIGFIPTMGALHEGHIALIKKAKEQNELVVVSIFLNPTQFLKGEDLDKYPKKDEADRQICKLCGVDILFFPHVDGIYGSDEVSLLAPKIRGFVLEGQSRPSHFNGVLTVVMKLLNIVRPKRAYFGKKDAQQLNLISLMVKQLFMSVEIVAVDTVREKDGLALSSRNAYLTPAQRQEALKIATSLRSATAMVMRGIFDSELIIANMREILSPLDISYVAIVNREFTELKRVEIGNSVILVEASLGSTRLLDNIWL.

27 to 34 (MGALHEGH) contacts ATP. The active-site Proton donor is His-34. Residue Gln-58 participates in (R)-pantoate binding. Gln-58 is a beta-alanine binding site. An ATP-binding site is contributed by 144-147 (GKKD). Gln-150 is a binding site for (R)-pantoate. ATP-binding positions include Val-173 and 181 to 184 (LSSR).

The protein belongs to the pantothenate synthetase family. As to quaternary structure, homodimer.

Its subcellular location is the cytoplasm. The enzyme catalyses (R)-pantoate + beta-alanine + ATP = (R)-pantothenate + AMP + diphosphate + H(+). The protein operates within cofactor biosynthesis; (R)-pantothenate biosynthesis; (R)-pantothenate from (R)-pantoate and beta-alanine: step 1/1. Functionally, catalyzes the condensation of pantoate with beta-alanine in an ATP-dependent reaction via a pantoyl-adenylate intermediate. In Sulfurimonas denitrificans (strain ATCC 33889 / DSM 1251) (Thiomicrospira denitrificans (strain ATCC 33889 / DSM 1251)), this protein is Pantothenate synthetase.